The primary structure comprises 214 residues: Molybdenum cofactor guanylyltransferase (214 aa).

GTP-binding positions include 18–20 (LAG), lysine 31, aspartate 77, and aspartate 112. Aspartate 112 provides a ligand contact to Mg(2+).

It belongs to the MobA family. As to quaternary structure, monomer. The cofactor is Mg(2+).

The protein resides in the cytoplasm. The catalysed reaction is Mo-molybdopterin + GTP + H(+) = Mo-molybdopterin guanine dinucleotide + diphosphate. In terms of biological role, transfers a GMP moiety from GTP to Mo-molybdopterin (Mo-MPT) cofactor (Moco or molybdenum cofactor) to form Mo-molybdopterin guanine dinucleotide (Mo-MGD) cofactor. The chain is Molybdenum cofactor guanylyltransferase from Rhodopseudomonas palustris (strain HaA2).